The sequence spans 58 residues: UPF0434 protein NT01EI_2448 (58 aa).

The protein belongs to the UPF0434 family.

The sequence is that of UPF0434 protein NT01EI_2448 from Edwardsiella ictaluri (strain 93-146).